The primary structure comprises 222 residues: MSKVLVTGFGPYGVTPVNPAQLTAEELDGRTIAGATVISRIVPNTFFESIAAAQQAIAEIEPALVIMLGEYPGRSMITVERLAQNVNDCGRYGLADCAGRVLVGEPTDPAGPVAYHATVPVRAMVLAMRKAGVPADVSDAAGTFVCNHLMYGVLHHLAQKGLPVRAGWIHLPCLPSVAALDHNLGVPSMSVQTAVAGVTAGIEAAIRQSADIREPIPSRLQI.

Catalysis depends on residues Glu-80, Cys-146, and His-170.

The protein belongs to the peptidase C15 family. In terms of assembly, homotetramer.

The protein resides in the cytoplasm. The catalysed reaction is Release of an N-terminal pyroglutamyl group from a polypeptide, the second amino acid generally not being Pro.. Its function is as follows. Removes 5-oxoproline from various penultimate amino acid residues except L-proline. This chain is Pyrrolidone-carboxylate peptidase, found in Mycobacterium tuberculosis (strain ATCC 25177 / H37Ra).